The primary structure comprises 259 residues: Imidazole glycerol phosphate synthase subunit HisF (259 aa).

Residues D11 and D130 contribute to the active site.

This sequence belongs to the HisA/HisF family. Heterodimer of HisH and HisF.

It localises to the cytoplasm. It catalyses the reaction 5-[(5-phospho-1-deoxy-D-ribulos-1-ylimino)methylamino]-1-(5-phospho-beta-D-ribosyl)imidazole-4-carboxamide + L-glutamine = D-erythro-1-(imidazol-4-yl)glycerol 3-phosphate + 5-amino-1-(5-phospho-beta-D-ribosyl)imidazole-4-carboxamide + L-glutamate + H(+). Its pathway is amino-acid biosynthesis; L-histidine biosynthesis; L-histidine from 5-phospho-alpha-D-ribose 1-diphosphate: step 5/9. Its function is as follows. IGPS catalyzes the conversion of PRFAR and glutamine to IGP, AICAR and glutamate. The HisF subunit catalyzes the cyclization activity that produces IGP and AICAR from PRFAR using the ammonia provided by the HisH subunit. The polypeptide is Imidazole glycerol phosphate synthase subunit HisF (Variovorax paradoxus (strain S110)).